The sequence spans 421 residues: 5-hydroxytryptamine receptor 1A (421 aa).

Residues 1–38 (MDMFSLGQGNNTTTSLEPFGTGGNDTGLSNVTFSYQVI) lie on the Extracellular side of the membrane. Residues N10, N11, N24, and N30 are each glycosylated (N-linked (GlcNAc...) asparagine). Residues 39–59 (TSLLLGTLIFCAVLGNACVVA) traverse the membrane as a helical segment. Residues 60 to 73 (AIALERSLQNVANY) lie on the Cytoplasmic side of the membrane. Residues 74 to 98 (LIGSLAVTDLMVSVLVLPMAALYQV) form a helical membrane-spanning segment. Residues 99-107 (LNKWTLGQV) lie on the Extracellular side of the membrane. A helical transmembrane segment spans residues 108–132 (TCDLFIALDVLCCTSSILHLCAIAL). C109 and C187 are joined by a disulfide. D116 and C120 together coordinate serotonin. The short motif at 133-135 (DRY) is the DRY motif; important for ligand-induced conformation changes element. The Cytoplasmic segment spans residues 133-152 (DRYWAITDPIDYVNKRTPRR). The chain crosses the membrane as a helical span at residues 153–174 (AAALISLTWLIGFLISIPPMLG). Residues 175–193 (WRTPEDRSNPNECTISKDH) lie on the Extracellular side of the membrane. A helical membrane pass occupies residues 194–216 (GYTIYSTFGAFYIPLLLMLVLYG). The Cytoplasmic segment spans residues 217 to 346 (RIFRAARFRI…LARERKTVKT (130 aa)). Positions 237-268 (GAGTSFGTSSAPPPKKSLNGQPGSGDCRRSAE) are disordered. 4 residues coordinate 1D-myo-inositol 4-phosphate: T314, K345, T346, and G352. Residues 347–370 (LGIIMGTFILCWLPFFIVALVLPF) form a helical membrane-spanning segment. At 371-378 (CESSCHMP) the chain is on the extracellular side. Residues 379 to 403 (ELLGAIINWLGYSNSLLNPVIYAYF) traverse the membrane as a helical segment. An NPxxY motif; important for ligand-induced conformation changes and signaling motif is present at residues 396–400 (NPVIY). Residues F403, N404, and K405 each coordinate 1D-myo-inositol 4-phosphate. The Cytoplasmic portion of the chain corresponds to 404–421 (NKDFQNAFKKIIKCKFCR).

Belongs to the G-protein coupled receptor 1 family. 5-hydroxytryptamine receptor subfamily. HTR1A sub-subfamily. As to quaternary structure, heterodimer; heterodimerizes with GPER1. Interacts with YIF1B. Interacts with GPR39 and GALR1. Most abundantly expressed in midbrain, in dorsal raphe and hippocampus. Detected at lower levels in amygdala and brain cortex.

It localises to the cell membrane. The protein localises to the cell projection. Its subcellular location is the dendrite. G-protein coupled receptor activity is regulated by lipids: phosphatidylinositol 4-phosphate increases HTR1A-mediated activity. Plays a role in the regulation of dopamine and 5-hydroxytryptamine levels in the brain, and thereby affects neural activity, mood and behavior. Plays a role in the response to anxiogenic stimuli. Functionally, G-protein coupled receptor for 5-hydroxytryptamine (serotonin). Also functions as a receptor for various drugs and psychoactive substances. Ligand binding causes a conformation change that triggers signaling via guanine nucleotide-binding proteins (G proteins) and modulates the activity of downstream effectors, such as adenylate cyclase. HTR1A is coupled to G(i)/G(o) G alpha proteins and mediates inhibitory neurotransmission: signaling inhibits adenylate cyclase activity and activates a phosphatidylinositol-calcium second messenger system that regulates the release of Ca(2+) ions from intracellular stores. Beta-arrestin family members regulate signaling by mediating both receptor desensitization and resensitization processes. The chain is 5-hydroxytryptamine receptor 1A (Htr1a) from Mus musculus (Mouse).